A 432-amino-acid chain; its full sequence is MTKSLSEQLFETAEGLLPGGVNSPVRAFRAVGGVPRFIDRAEGSRIYDIDGREYIDYVGSWGPMILGHSHPQVVEAIRKAVERGTSYGAPTPGEIALARTIIEAFPSMEMIRMVSSGTEAVMSAIRLARGFTGRDKILKFEGCYHGHGDSLLVKAGSGVATLGIPGSPGVPACLAELTITVPFNSNEAFRKAVDRHGKELACVIVEPVAANMGVVNPRPGFLETLRELTRKAGIVLIFDEVITGFRLAYGGFQKLCRLEPDLTCLGKIIGGGLPVGAFGGKRTIMDFLAPNGPVYQAGTLSGNPLAMSAGLATLETLRSRRDDYAALDRRTADLCAAMGKLFRTAELPVRINRAGSLFTVFFTDSDVFDYETASHCNLERYARFFKGMLDRGVYLAPSAFEAAFVSFAHSDEDLEKTLQACAETIKTLGGNP.

Lys-267 is modified (N6-(pyridoxal phosphate)lysine).

It belongs to the class-III pyridoxal-phosphate-dependent aminotransferase family. HemL subfamily. In terms of assembly, homodimer. Pyridoxal 5'-phosphate serves as cofactor.

The protein resides in the cytoplasm. It catalyses the reaction (S)-4-amino-5-oxopentanoate = 5-aminolevulinate. It participates in porphyrin-containing compound metabolism; protoporphyrin-IX biosynthesis; 5-aminolevulinate from L-glutamyl-tRNA(Glu): step 2/2. This is Glutamate-1-semialdehyde 2,1-aminomutase from Syntrophus aciditrophicus (strain SB).